The following is a 149-amino-acid chain: SsrA-binding protein (149 aa).

The interval 123-149 is disordered; that stretch reads KQFDKRETEKQRDWQREKARIMKGGKE.

It belongs to the SmpB family.

It localises to the cytoplasm. Required for rescue of stalled ribosomes mediated by trans-translation. Binds to transfer-messenger RNA (tmRNA), required for stable association of tmRNA with ribosomes. tmRNA and SmpB together mimic tRNA shape, replacing the anticodon stem-loop with SmpB. tmRNA is encoded by the ssrA gene; the 2 termini fold to resemble tRNA(Ala) and it encodes a 'tag peptide', a short internal open reading frame. During trans-translation Ala-aminoacylated tmRNA acts like a tRNA, entering the A-site of stalled ribosomes, displacing the stalled mRNA. The ribosome then switches to translate the ORF on the tmRNA; the nascent peptide is terminated with the 'tag peptide' encoded by the tmRNA and targeted for degradation. The ribosome is freed to recommence translation, which seems to be the essential function of trans-translation. This is SsrA-binding protein from Cupriavidus taiwanensis (strain DSM 17343 / BCRC 17206 / CCUG 44338 / CIP 107171 / LMG 19424 / R1) (Ralstonia taiwanensis (strain LMG 19424)).